A 290-amino-acid chain; its full sequence is Shikimate dehydrogenase (NADP(+)) (290 aa).

Shikimate-binding positions include 22–24 and Thr68; that span reads SLS. Lys72 (proton acceptor) is an active-site residue. Asp84 provides a ligand contact to NADP(+). Residues Asn93 and Asp108 each coordinate shikimate. NADP(+) is bound by residues 133–137 and Ile228; that span reads GSGGS. A shikimate-binding site is contributed by Tyr230. Gly251 contacts NADP(+).

The protein belongs to the shikimate dehydrogenase family. In terms of assembly, homodimer.

It carries out the reaction shikimate + NADP(+) = 3-dehydroshikimate + NADPH + H(+). It functions in the pathway metabolic intermediate biosynthesis; chorismate biosynthesis; chorismate from D-erythrose 4-phosphate and phosphoenolpyruvate: step 4/7. In terms of biological role, involved in the biosynthesis of the chorismate, which leads to the biosynthesis of aromatic amino acids. Catalyzes the reversible NADPH linked reduction of 3-dehydroshikimate (DHSA) to yield shikimate (SA). The polypeptide is Shikimate dehydrogenase (NADP(+)) (Leptospira interrogans serogroup Icterohaemorrhagiae serovar Lai (strain 56601)).